We begin with the raw amino-acid sequence, 906 residues long: DNA gyrase subunit A (906 aa).

The Topo IIA-type catalytic domain occupies 35 to 524; the sequence is IPDVRDGLKP…GEFDQDIEDL (490 aa). Tyr123 functions as the O-(5'-phospho-DNA)-tyrosine intermediate in the catalytic mechanism. A GyrA-box motif is present at residues 551 to 557; that stretch reads QKRGGKG. The tract at residues 886–906 is disordered; that stretch reads SESEEDSELEEDLEQAEEVYT.

It belongs to the type II topoisomerase GyrA/ParC subunit family. In terms of assembly, heterotetramer, composed of two GyrA and two GyrB chains. In the heterotetramer, GyrA contains the active site tyrosine that forms a transient covalent intermediate with DNA, while GyrB binds cofactors and catalyzes ATP hydrolysis.

It localises to the cytoplasm. The catalysed reaction is ATP-dependent breakage, passage and rejoining of double-stranded DNA.. Functionally, a type II topoisomerase that negatively supercoils closed circular double-stranded (ds) DNA in an ATP-dependent manner to modulate DNA topology and maintain chromosomes in an underwound state. Negative supercoiling favors strand separation, and DNA replication, transcription, recombination and repair, all of which involve strand separation. Also able to catalyze the interconversion of other topological isomers of dsDNA rings, including catenanes and knotted rings. Type II topoisomerases break and join 2 DNA strands simultaneously in an ATP-dependent manner. The polypeptide is DNA gyrase subunit A (Rickettsia felis (strain ATCC VR-1525 / URRWXCal2) (Rickettsia azadi)).